The chain runs to 67 residues: UPF0434 protein Reut_A0592 (67 aa).

The protein belongs to the UPF0434 family.

This chain is UPF0434 protein Reut_A0592, found in Cupriavidus pinatubonensis (strain JMP 134 / LMG 1197) (Cupriavidus necator (strain JMP 134)).